Here is a 277-residue protein sequence, read N- to C-terminus: Large ribosomal subunit protein uL2 (277 aa).

The disordered stretch occupies residues 211 to 277; sequence SRWKGVRPTV…KLIVRGRKKK (67 aa).

It belongs to the universal ribosomal protein uL2 family. As to quaternary structure, part of the 50S ribosomal subunit. Forms a bridge to the 30S subunit in the 70S ribosome.

One of the primary rRNA binding proteins. Required for association of the 30S and 50S subunits to form the 70S ribosome, for tRNA binding and peptide bond formation. It has been suggested to have peptidyltransferase activity; this is somewhat controversial. Makes several contacts with the 16S rRNA in the 70S ribosome. The polypeptide is Large ribosomal subunit protein uL2 (Staphylococcus epidermidis (strain ATCC 35984 / DSM 28319 / BCRC 17069 / CCUG 31568 / BM 3577 / RP62A)).